The following is a 125-amino-acid chain: Small ribosomal subunit protein uS13 (125 aa).

A disordered region spans residues 95-125 (GLPVNGQRTRTNARTRKGVKKTVANKKKATK). A compositionally biased stretch (basic residues) spans 105-125 (TNARTRKGVKKTVANKKKATK).

The protein belongs to the universal ribosomal protein uS13 family. In terms of assembly, part of the 30S ribosomal subunit. Forms a loose heterodimer with protein S19. Forms two bridges to the 50S subunit in the 70S ribosome.

Its function is as follows. Located at the top of the head of the 30S subunit, it contacts several helices of the 16S rRNA. In the 70S ribosome it contacts the 23S rRNA (bridge B1a) and protein L5 of the 50S subunit (bridge B1b), connecting the 2 subunits; these bridges are implicated in subunit movement. Contacts the tRNAs in the A and P-sites. The sequence is that of Small ribosomal subunit protein uS13 from Leptospira biflexa serovar Patoc (strain Patoc 1 / Ames).